A 351-amino-acid polypeptide reads, in one-letter code: Protein MGF 360-12L (351 aa).

The stretch at D57–I89 is one ANK repeat.

The protein belongs to the asfivirus MGF 360 family.

In terms of biological role, plays a role in virus cell tropism, and may be required for efficient virus replication in macrophages. In Ornithodoros (relapsing fever ticks), this protein is Protein MGF 360-12L.